Reading from the N-terminus, the 435-residue chain is FAD-dependent monooxygenase ATEG_07662 (435 aa).

The helical transmembrane segment at 8 to 28 (PLDVAIIGGGIIGIMTALGLL) threads the bilayer. Positions 38, 51, and 119 each coordinate FAD. The N-linked (GlcNAc...) asparagine glycan is linked to asparagine 191. Residue arginine 201 is part of the active site. FAD is bound by residues aspartate 317 and alanine 330.

This sequence belongs to the paxM FAD-dependent monooxygenase family. The cofactor is FAD.

The protein resides in the membrane. It participates in secondary metabolite biosynthesis. FAD-dependent monooxygenase; part of the cluster B that mediates the biosynthesis of azasperpyranones, members of the azaphilone family that exhibit anti-cancer activities. Azasperpyranones are synthesized by 2 clusters, A and B. Cluster A is responsible for the production of the polyhydric phenol moiety while the azaphilonoid scaffold is produced by the cluster B. The non-reducing polyketide synthase ATEG_03629 produces 5-methyl orsellinic acid, which is then reduced to 5-methyl orsellinic aldehyde by the NRPS-like protein ATEG_03630. 5-methyl orsellinic aldehyde is then first hydroxylated by the FAD-dependent monooxygenase ATEG_03635 and subsequently hydroxylated by the cytochrome P450 monooxygenase ATEG_03631 to produce the unstable polyhydric phenol precursor of azasperpyranones. On the other hand, the polyketide synthase ATEG_07659 is responsible for producing the 3,5-dimethyloctadienone moiety from acetyl-CoA, three malonyl-CoA, and two S-adenosyl methionines (SAM). The 3,5-dimethyloctadienone moiety is then loaded onto the SAT domain of ATEG_07661 and extended with four malonyl-CoA and one SAM, which leads to the formation of 2,4-dihydroxy-6-(5,7-dimethyl-2-oxo-trans-3-trans-5-nonadienyl)-3-methylbenzaldehyde (compound 8) after reductive release and aldol condensation. The FAD-dependent monooxygenase ATEG_07662 is the next enzyme in the biosynthesis sequence and hydroxylates the side chain at the benzylic position of compound 8. In Aspergillus nidulans, afoF, the ortholog of the FAD-dependent oxygenase ATEG_07660, is the key enzyme for the biosynthesis of asperfuranone by catalyzing the hydroxylation at C-8 of to prevent the formation of a six-membered ring hemiacetal intermediate and thus facilitating the formation of a five-membered ring to produce asperfuranone. In Aspergillus terreus, ATEG_07660 is probably not functional, which leads to the formation of the six-membered ring hemiacetal intermediate presperpyranone instead of asperfuranone. Finally, ATEG_03636 is involved in the condensation of the polyhydric phenol moiety produced by cluster A and the perasperpyranone precursor produced by cluster B, to yield azasperpyranone A. Further modifications of azasperpyranone A result in the production of derivatives, including azasperpyranone B to F. The polypeptide is FAD-dependent monooxygenase ATEG_07662 (Aspergillus terreus (strain NIH 2624 / FGSC A1156)).